We begin with the raw amino-acid sequence, 271 residues long: Imidazole glycerol phosphate synthase subunit HisF (271 aa).

Residues aspartate 12 and aspartate 136 contribute to the active site.

Belongs to the HisA/HisF family. Heterodimer of HisH and HisF.

Its subcellular location is the cytoplasm. The catalysed reaction is 5-[(5-phospho-1-deoxy-D-ribulos-1-ylimino)methylamino]-1-(5-phospho-beta-D-ribosyl)imidazole-4-carboxamide + L-glutamine = D-erythro-1-(imidazol-4-yl)glycerol 3-phosphate + 5-amino-1-(5-phospho-beta-D-ribosyl)imidazole-4-carboxamide + L-glutamate + H(+). The protein operates within amino-acid biosynthesis; L-histidine biosynthesis; L-histidine from 5-phospho-alpha-D-ribose 1-diphosphate: step 5/9. In terms of biological role, IGPS catalyzes the conversion of PRFAR and glutamine to IGP, AICAR and glutamate. The HisF subunit catalyzes the cyclization activity that produces IGP and AICAR from PRFAR using the ammonia provided by the HisH subunit. The chain is Imidazole glycerol phosphate synthase subunit HisF from Natronomonas pharaonis (strain ATCC 35678 / DSM 2160 / CIP 103997 / JCM 8858 / NBRC 14720 / NCIMB 2260 / Gabara) (Halobacterium pharaonis).